Reading from the N-terminus, the 233-residue chain is Glucosamine-6-phosphate deaminase (233 aa).

D62 functions as the Proton acceptor; for enolization step in the catalytic mechanism. N128 acts as the For ring-opening step in catalysis. The Proton acceptor; for ring-opening step role is filled by H130. The active-site For ring-opening step is E135.

It belongs to the glucosamine/galactosamine-6-phosphate isomerase family. NagB subfamily.

It catalyses the reaction alpha-D-glucosamine 6-phosphate + H2O = beta-D-fructose 6-phosphate + NH4(+). It functions in the pathway amino-sugar metabolism; N-acetylneuraminate degradation; D-fructose 6-phosphate from N-acetylneuraminate: step 5/5. Its function is as follows. Catalyzes the reversible isomerization-deamination of glucosamine 6-phosphate (GlcN6P) to form fructose 6-phosphate (Fru6P) and ammonium ion. In Streptococcus thermophilus (strain ATCC BAA-491 / LMD-9), this protein is Glucosamine-6-phosphate deaminase.